Reading from the N-terminus, the 357-residue chain is Protein AAR2 homolog (357 aa).

This sequence belongs to the AAR2 family.

This chain is Protein AAR2 homolog, found in Caenorhabditis elegans.